Here is a 292-residue protein sequence, read N- to C-terminus: Probable alpha-L-glutamate ligase (292 aa).

The ATP-grasp domain occupies His-104 to Glu-287. ATP-binding positions include Lys-141, Glu-178 to Phe-179, Asp-187, and Arg-211 to Asn-213. 3 residues coordinate Mg(2+): Asp-248, Glu-260, and Asn-262. Residues Asp-248, Glu-260, and Asn-262 each coordinate Mn(2+).

It belongs to the RimK family. Requires Mg(2+) as cofactor. Mn(2+) is required as a cofactor.

In Stenotrophomonas maltophilia (strain R551-3), this protein is Probable alpha-L-glutamate ligase.